Here is a 118-residue protein sequence, read N- to C-terminus: Large ribosomal subunit protein bL20 (118 aa).

The protein belongs to the bacterial ribosomal protein bL20 family.

Its function is as follows. Binds directly to 23S ribosomal RNA and is necessary for the in vitro assembly process of the 50S ribosomal subunit. It is not involved in the protein synthesizing functions of that subunit. The protein is Large ribosomal subunit protein bL20 of Ectopseudomonas mendocina (strain ymp) (Pseudomonas mendocina).